The chain runs to 1073 residues: Probable nuclear hormone receptor HR38 (1073 aa).

Disordered stretches follow at residues 55–87 (NLNAPTHQQSHTSHLQHAQQHQTHQQHPLLPPP), 150–185 (TPAPPATEPRKIKPLGAGKLKVGKTDSNSDSNSNCD), 263–326 (TQTA…LVSP), 437–458 (ALHAQQQQQQQQQQQQQQQQHQ), 492–514 (KYNSSSGSSPQQASSSSTAAPTP), 529–579 (PPLS…NSGG), and 618–640 (GQQQQQQQQSYQQHNYNSHNGER). Low complexity-rich tracts occupy residues 59-82 (PTHQQSHTSHLQHAQQHQTHQQHP), 175-185 (DSNSDSNSNCD), and 263-277 (TQTASTTTTTSASAA). Residues 279 to 291 (HHQHHNHLLHQQH) are compositionally biased toward basic residues. 3 stretches are compositionally biased toward low complexity: residues 292-326 (HNQQQQQQQQQQQQQQQQQQQEHLQQQHQQQLVSP), 441-458 (QQQQQQQQQQQQQQQQHQ), and 495-514 (SSSGSSPQQASSSSTAAPTP). The span at 619–636 (QQQQQQQQSYQQHNYNSH) shows a compositional bias: low complexity. A DNA-binding region (nuclear receptor) is located at residues 741–816 (SQLCAVCGDT…VGMVKEVVRT (76 aa)). 2 NR C4-type zinc fingers span residues 744–764 (CAVCGDTAACQHYGVRTCEGC) and 780–804 (CLADKNCPVDKRRRNRCQFCRFQKC). A disordered region spans residues 819–841 (LKGRRGRLPSKPKSPQESPPSPP). The NR LBD domain occupies 840-1070 (PPISLITALV…ALIENMFVTT (231 aa)).

This sequence belongs to the nuclear hormone receptor family. NR4 subfamily. As to quaternary structure, forms a heterodimer with USP. In terms of tissue distribution, ubiquitously expressed in preblastoderm embryos, specifically in central nervous system and intestinal tract. Highly expressed in third instar larval imaginal disks and brain complexes, but not in ovaries.

Its subcellular location is the nucleus. Its function is as follows. Binds to NGFI-B response elements. Plays an important role in late stages of epidermal metamorphosis. The sequence is that of Probable nuclear hormone receptor HR38 (Hr38) from Drosophila melanogaster (Fruit fly).